Consider the following 772-residue polypeptide: Semaphorin-3A (772 aa).

The N-terminal stretch at 1–20 is a signal peptide; that stretch reads MGWFTGIACLFWGILLTARA. Residues 31-514 enclose the Sema domain; that stretch reads RLKLSYKEML…STAGVAQLPL (484 aa). A glycan (N-linked (GlcNAc...) asparagine) is linked at Asn-53. An intrachain disulfide couples Cys-103 to Cys-114. Asn-125 carries an N-linked (GlcNAc...) asparagine glycan. Cystine bridges form between Cys-132–Cys-141, Cys-269–Cys-381, Cys-293–Cys-341, and Cys-517–Cys-535. Residues 577–665 enclose the Ig-like C2-type domain; the sequence is HGHSLEERII…GFMQTLLKVT (89 aa). Asn-591 is a glycosylation site (N-linked (GlcNAc...) asparagine). A disulfide bridge connects residues Cys-650 and Cys-723. Residues 677–691 are compositionally biased toward basic and acidic residues; the sequence is LLHKDDDGDGSKTKE. Disordered stretches follow at residues 677-698 and 729-772; these read LLHK…SMTP and RDRK…PRSV. Basic residues predominate over residues 729–738; sequence RDRKQRRQRP. Residues 750–772 are compositionally biased toward basic and acidic residues; the sequence is HMQESKKGRNRRTHEFERAPRSV.

This sequence belongs to the semaphorin family. In terms of assembly, interacts with PLXND1. Expressed in the dorsal root ganglia.

Its subcellular location is the secreted. Functionally, may be involved in guiding growing axons towards their targets by forming a molecular boundary that instructs axons to engage in the formation of specific nerve tracts. Binds to neuropilin. Involved in the development of the olfactory system and in neuronal control of puberty. The sequence is that of Semaphorin-3A (Sema3a) from Rattus norvegicus (Rat).